Consider the following 157-residue polypeptide: Subgroup A Rous sarcoma virus receptor pg950 (157 aa).

The N-terminal stretch at 1–19 (MARLLPALLLLLLPGNVTG) is a signal peptide. 2 N-linked (GlcNAc...) asparagine glycosylation sites follow: Asn20 and Asn24. Topologically, residues 20–102 (NGSGNGSLSR…RALPARNHGR (83 aa)) are extracellular. The LDL-receptor class A domain maps to 28–71 (SRCPPGQFRCSEPPGAHGECYPQDWLCDGHPDCDDGRDEWGCGT). Disulfide bonds link Cys30/Cys47, Cys37/Cys60, and Cys54/Cys69. N-linked (GlcNAc...) asparagine glycosylation is present at Asn81. Residues 103-125 (MWMLITAVLLCCLVAVGGIAAWG) traverse the membrane as a helical segment. The Cytoplasmic portion of the chain corresponds to 126 to 157 (KSKAKSRSDIFSLASASKELLVPDKSQADLFS).

(Microbial infection) Interacts with Rous sarcoma virus envelope protein; this interaction allows the viral attachment.

The protein localises to the membrane. Functionally, responsible for susceptibility to the retrovirus subgroup A Rous sarcoma virus. The sequence is that of Subgroup A Rous sarcoma virus receptor pg950 from Coturnix japonica (Japanese quail).